The following is a 217-amino-acid chain: MKFFIDTADVGEIKKALALGLCDGVTTNPSLVAKTGRGFEDVLKEIVQLVPGPISAEVTATDYEGMLREGRHYAKFGSQVVIKVPLTVDGLRAVKTLTDEGTKVNVTLCFSPVQALLAAKAGATYISPFVGRLDDISQDGMAMVADIVQIYRNYGFKTQVLVASVRHPVHVLEAAKLGADVATIPYSVIEQLAKHPLTDAGLKKFLADWEKVPKAPK.

The active-site Schiff-base intermediate with substrate is the lysine 83.

This sequence belongs to the transaldolase family. Type 3B subfamily.

It is found in the cytoplasm. It catalyses the reaction D-sedoheptulose 7-phosphate + D-glyceraldehyde 3-phosphate = D-erythrose 4-phosphate + beta-D-fructose 6-phosphate. It functions in the pathway carbohydrate degradation; pentose phosphate pathway; D-glyceraldehyde 3-phosphate and beta-D-fructose 6-phosphate from D-ribose 5-phosphate and D-xylulose 5-phosphate (non-oxidative stage): step 2/3. Functionally, transaldolase is important for the balance of metabolites in the pentose-phosphate pathway. The chain is Probable transaldolase from Anaeromyxobacter sp. (strain K).